The sequence spans 223 residues: Probable Ras-related protein Rab-4A (223 aa).

16–23 (GNAGTGKT) serves as a coordination point for GTP. The Effector region motif lies at 38-46 (TQHTIGAEF). Residues 64 to 68 (DTAGQ) and 122 to 125 (NKKD) each bind GTP. S-geranylgeranyl cysteine attachment occurs at residues C221 and C223. The residue at position 223 (C223) is a Cysteine methyl ester.

It belongs to the small GTPase superfamily. Rab family.

The protein resides in the cell membrane. Functionally, protein transport. Probably involved in vesicular traffic. This is Probable Ras-related protein Rab-4A from Echinococcus multilocularis (Fox tapeworm).